The sequence spans 641 residues: Forkhead box protein P4 (641 aa).

Disordered regions lie at residues 1–43 and 239–264; these read MMVE…NGEL and SFPT…RRES. 2 stretches are compositionally biased toward polar residues: residues 8-27 and 239-259; these read IRST…QSDS and SFPT…NGQN. A C2H2-type zinc finger spans residues 278–303; it reads GECRWPGCEALCEDMGQFIKHLNTEH. Positions 320–341 are leucine-zipper; the sequence is VQQLEIQLAKESERLQAMMTHL. The ctbp1-binding stretch occupies residues 354–358; it reads PLNLV. Positions 436–526 form a DNA-binding region, fork-head; sequence RPPFTYASLI…PPKMTGSPTL (91 aa). Residues 563 to 641 form a disordered region; the sequence is SSGSVLHGGH…ESESPMEDLP (79 aa). Polar residues predominate over residues 576-599; the sequence is TSTGEPGNSNGSSPRLSPQYSQSI. Over residues 600–611 the composition is skewed to basic and acidic residues; sequence HVKEEPAEDDVR. Residues 629 to 641 show a composition bias toward acidic residues; the sequence is RDLESESPMEDLP.

In terms of assembly, dimerization is required for DNA-binding. First expressed in the anterior neural field of stage 15 embryos. At stage 18, localized in three domains of the brain (rostral forebrain, midbrain and hindbrain) and in the eye anlage. Cerebral and retinal expression persists at later stages with additional expression in the branchial arches, at the base of the hatching gland, and in the pancreas.

It localises to the nucleus. Functionally, transcriptional repressor. This is Forkhead box protein P4 from Xenopus laevis (African clawed frog).